A 233-amino-acid polypeptide reads, in one-letter code: MRKHLLDHLKTRKILGARIAKGEKTEQDLINLNMAPQVFMFKNLFSGQVLYSQVPAFHQDQIDEQFTRPNWENRKPSRRNDLWRIMCVANFENYEYAIAAYKGLVQLRQVRDVVQKKEAKALRKKNDEGNVWFSGQYRPTYSQEAVADLSHVIDEFELEGTSVMWESLWRKGEDTHWRSDLVEHDTLPPFNPRDQTILLDELRAKAVEEFANLRQQAQQSEQQSQSELESQTA.

The disordered stretch occupies residues 214-233 (RQQAQQSEQQSQSELESQTA). The segment covering 215 to 233 (QQAQQSEQQSQSELESQTA) has biased composition (low complexity).

This sequence belongs to the mitochondrion-specific ribosomal protein mL67 family.

It is found in the nucleus. The protein localises to the mitochondrion. Its function is as follows. Transcription factor involved in regulation of RNA polymerase II-dependent transcription. Also involved in regulation of mitochondrial DNA recombination, maintenance and repair, and generation of homoplasmic cells. The polypeptide is Large ribosomal subunit protein mL67 (MHR1) (Debaryomyces hansenii (strain ATCC 36239 / CBS 767 / BCRC 21394 / JCM 1990 / NBRC 0083 / IGC 2968) (Yeast)).